Consider the following 161-residue polypeptide: uncharacterized protein (161 aa).

A helical transmembrane segment spans residues 76–94; the sequence is ISISSQCIFNVVILSFVFT.

It is found in the membrane. This is an uncharacterized protein from Saccharomyces cerevisiae (strain ATCC 204508 / S288c) (Baker's yeast).